The primary structure comprises 2793 residues: Iterative polyketide synthase afoE (2793 aa).

The interval 1–401 is N-terminal acylcarrier protein transacylase domain (SAT); that stretch reads MTRASASGSG…PEKPSFWLTP (401 aa). C157 (nucleophile; for transacylase activity) is an active-site residue. H279 (proton donor/acceptor; for transacylase activity) is an active-site residue. The Ketosynthase family 3 (KS3) domain occupies 435–862; sequence SEPIAIVGMS…GSNASMIVTQ (428 aa). Residues C611, H746, and H785 each act as for beta-ketoacyl synthase activity in the active site. The interval 977-1265 is malonyl-CoA:ACP transacylase (MAT); it reads FGGQISRFVG…SSTITVMAGR (289 aa). The segment at 1384-1515 is N-terminal hotdog fold; sequence WEFVGYQDDE…ATVEMRSSSD (132 aa). Positions 1384-1698 constitute a PKS/mFAS DH domain; the sequence is WEFVGYQDDE…YMRVAKASMS (315 aa). The tract at residues 1411–1696 is product template (PT) domain; sequence YVLSHVIAQT…VQYMRVAKAS (286 aa). H1415 acts as the Proton acceptor; for dehydratase activity in catalysis. Residues 1550-1698 are C-terminal hotdog fold; that stretch reads VEVLQGRNVY…YMRVAKASMS (149 aa). Catalysis depends on D1607, which acts as the Proton donor; for dehydratase activity. The interval 1734 to 1776 is disordered; sequence PEVRASSEPGAKVKASKTSKKEKKEKKPVTKAKSKSSKPSGWR. The segment covering 1747-1769 has biased composition (basic residues); that stretch reads KASKTSKKEKKEKKPVTKAKSKS. The Carrier domain maps to 1776-1850; that stretch reads RDITEEVRNL…KFVQCVSNAL (75 aa). An O-(pantetheine 4'-phosphoryl)serine modification is found at S1810. Positions 1853 to 1903 are disordered; it reads PNAGPAEAEDDEDEEKSDNSSSESASESDDAGSESSDTGILTPTGEEEQPL. Over residues 1859–1868 the composition is skewed to acidic residues; the sequence is EAEDDEDEEK. Positions 2115–2294 are methyltransferase domain; that stretch reads NLLAERIGRT…HVDWTDGNLP (180 aa). The segment at 2360–2379 is disordered; sequence SRAEKESGKTQAPHAAPGRR. Positions 2387–2630 are NADPH-binding domain; it reads VTGATGSLGS…QWIPVDYCAA (244 aa).

Requires pantetheine 4'-phosphate as cofactor.

It catalyses the reaction (3E,5E,7S)-5,7-dimethyl-2-oxonona-3,5-dienyl-[ACP] + 4 malonyl-CoA + AH2 + S-adenosyl-L-methionine + 3 H(+) = 6-[(3E,5E,7S)-5,7-dimethyl-2-oxonona-3,5-dienyl]-2,4-dihydroxy-3-methylbenzaldehyde + holo-[ACP] + A + S-adenosyl-L-homocysteine + 4 CO2 + 4 CoA + H2O. Its pathway is secondary metabolite biosynthesis. Its function is as follows. Iterative polyketide synthase; part of the gene cluster that mediates the biosynthesis of asperfuranone, a probable antitumor agent. The polyketide synthase afoG is responsible for producing the 3,5-dimethyloctadienone moiety from acetyl-CoA, three malonyl-CoA, and two S-adenosyl methionines (SAM). The 3,5-dimethyloctadienone moiety is then loaded onto the SAT domain of afoE and extended with four malonyl-CoA and one SAM, which leads to the formation of 2,4-dihydroxy-6-(5,7-dimethyl-2-oxo-trans-3-trans-5-nonadienyl)-3-methylbenzaldehyde (compound 2) after reductive release and aldol condensation. AfoD is the next enzyme in the biosynthesis sequence and hydroxylates the side chain at the benzylic position of compound 2. After benzylic hydroxylation, a furan ring is formed after five-member ring hemiacetal formation and water elimination. AfoF and afoC are proposed to oxidize the R-diketone proton and to reduce the unconjugated carbonyl group, respectively, to generate asperfuranone. Since no intermediates could be isolated from afoF and afoC deletants, the sequence of these two enzymes is not fully understood. Moreover, since afoC deletant still produces a small amount of asperfuranone, other endogenous oxidoreductases might catalyze the same reaction with much less efficiency. The sequence is that of Iterative polyketide synthase afoE from Emericella nidulans (strain FGSC A4 / ATCC 38163 / CBS 112.46 / NRRL 194 / M139) (Aspergillus nidulans).